The chain runs to 161 residues: Protein PLASTID TRANSCRIPTIONALLY ACTIVE 7 (161 aa).

Residues 1–32 (MASFTCSSPSSILPIIDTRSGNLRCTFQSQVS) constitute a chloroplast transit peptide.

In terms of assembly, component of the transcriptionally active chromosome (TAC) complexes. Interacts with FLN1, PTAC10, PTAC12/HMR/PAP5 and PTAC14. Binds to SL1/MTERF3. As to expression, mostly expressed in leaves, flowers and seedlings, and, to a lower extent, in roots and stems.

It is found in the plastid. It localises to the chloroplast. In terms of biological role, essential for chloroplast development, especially for thylakoid formation. Involved in plastid gene expression, probably by maintaining plastid-encoded RNA polymerase (PEP) activity. In Arabidopsis thaliana (Mouse-ear cress), this protein is Protein PLASTID TRANSCRIPTIONALLY ACTIVE 7.